The following is a 1390-amino-acid chain: Nuclear pore complex protein Nup155 (1390 aa).

The O-linked (GlcNAc) serine glycan is linked to S525. The segment at 598 to 632 (GSPMYSSSPVPTGSPYPNPSSLGTPSHGAQPPTMS) is disordered. K739 is covalently cross-linked (Glycyl lysine isopeptide (Lys-Gly) (interchain with G-Cter in SUMO2)). The tract at residues 984 to 1011 (QSKAAPQSPSVPKKPGPPVLSSDPNMLS) is disordered. At S1056 the chain carries Phosphoserine.

The protein belongs to the non-repetitive/WGA-negative nucleoporin family. Interacts with GLE1. Able to form a heterotrimer with GLE1 and NUP42 in vitro. Forms a complex with NUP35, NUP93, NUP205 and lamin B. Phosphorylated. Phosphorylation and dephosphorylation may be important for the function of NUP155 and may play a role in the reversible disassembly of the nuclear pore complex during mitosis. In terms of processing, disulfide-linked to NUP62. The inner channel of the NPC has a different redox environment from the cytoplasm and allows the formation of interchain disulfide bonds between some nucleoporins, the significant increase of these linkages upon oxidative stress reduces the permeability of the NPC.

It is found in the nucleus. The protein resides in the nuclear pore complex. Its subcellular location is the nucleus membrane. Its function is as follows. Essential component of nuclear pore complex. Could be essessential for embryogenesis. Nucleoporins may be involved both in binding and translocating proteins during nucleocytoplasmic transport. This Rattus norvegicus (Rat) protein is Nuclear pore complex protein Nup155 (Nup155).